The chain runs to 565 residues: Thiol:disulfide interchange protein DsbD (565 aa).

The N-terminal stretch at Met-1 to Ala-19 is a signal peptide. Disulfide bonds link Cys-122/Cys-128 and Cys-182/Cys-304. A run of 7 helical transmembrane segments spans residues Leu-163–Val-183, Leu-208–Val-228, Tyr-243–Phe-263, Gly-289–Leu-309, Trp-323–Ile-343, Trp-357–Leu-377, and Ile-384–Thr-404. The region spanning Trp-434–Pro-565 is the Thioredoxin domain. Cys-480 and Cys-483 are disulfide-bonded.

Belongs to the thioredoxin family. DsbD subfamily.

Its subcellular location is the cell inner membrane. It carries out the reaction [protein]-dithiol + NAD(+) = [protein]-disulfide + NADH + H(+). The catalysed reaction is [protein]-dithiol + NADP(+) = [protein]-disulfide + NADPH + H(+). Functionally, required to facilitate the formation of correct disulfide bonds in some periplasmic proteins and for the assembly of the periplasmic c-type cytochromes. Acts by transferring electrons from cytoplasmic thioredoxin to the periplasm. This transfer involves a cascade of disulfide bond formation and reduction steps. The polypeptide is Thiol:disulfide interchange protein DsbD (Escherichia coli O6:H1 (strain CFT073 / ATCC 700928 / UPEC)).